Here is a 993-residue protein sequence, read N- to C-terminus: Signal peptide, CUB and EGF-like domain-containing protein 3 (993 aa).

The first 20 residues, 1–20 (MGSGRVPGLCLLVLLVHARA), serve as a signal peptide directing secretion. The EGF-like 1; calcium-binding domain maps to 29–69 (DVDECVEGTDNCHIDAICQNTPRSYKCICKSGYTGDGKHCK). 26 disulfides stabilise this stretch: cysteine 33-cysteine 46, cysteine 40-cysteine 55, cysteine 57-cysteine 68, cysteine 74-cysteine 86, cysteine 82-cysteine 95, cysteine 97-cysteine 110, cysteine 116-cysteine 127, cysteine 123-cysteine 136, cysteine 161-cysteine 172, cysteine 168-cysteine 182, cysteine 184-cysteine 197, cysteine 201-cysteine 212, cysteine 208-cysteine 221, cysteine 223-cysteine 236, cysteine 240-cysteine 251, cysteine 247-cysteine 260, cysteine 262-cysteine 275, cysteine 281-cysteine 292, cysteine 288-cysteine 301, cysteine 303-cysteine 316, cysteine 322-cysteine 332, cysteine 328-cysteine 341, cysteine 343-cysteine 355, cysteine 361-cysteine 372, cysteine 368-cysteine 381, and cysteine 383-cysteine 397. In terms of domain architecture, EGF-like 2; calcium-binding spans 70–111 (DVDECEREDNAGCVHDCVNIPGNYRCTCYDGFHLAHDGHNCL). The EGF-like 3; calcium-binding domain occupies 112–148 (DVDECAEGNGGCQQSCVNMMGSYECHCREGFFLSDNQ). EGF-like domains follow at residues 157–198 (EGMN…RDCK), 199–237 (LTCNYGNGGCQHTCDDTEQGPRCGCHIKFVLHTDGKTCI), and 238–276 (ETCAVNNGGCDSKCHDAATGVHCTCPVGFMLQPDRKTCK). The region spanning 277–317 (DIDECRLNNGGCDHICRNTVGSFECSCKKGYKLLINERNCQ) is the EGF-like 7; calcium-binding domain. The EGF-like 8; calcium-binding domain occupies 318 to 356 (DIDECSFDRTCDHICVNTPGSFQCLCHRGYLLYGITHCG). One can recognise an EGF-like 9; calcium-binding domain in the interval 357–398 (DVDECSINRGGCRFGCINTPGSYQCTCPAGQGRLHWNGKDCT). 5 N-linked (GlcNAc...) asparagine glycosylation sites follow: asparagine 417, asparagine 464, asparagine 685, asparagine 756, and asparagine 785. Intrachain disulfides connect cysteine 804–cysteine 830 and cysteine 857–cysteine 878. The CUB domain maps to 804–916 (CGGELGEFTG…RGFQIPYVTY (113 aa)).

In terms of assembly, forms homooligomers. Forms heterooligomers with SCUBE1 and SCUBE2. Interacts with TGFBR2 through the CUB domain; this interaction does not affect TGFB1-binding to TGFBR2. Interacts with BMP2, BMP4 and BMP7; the interaction is mediated by the CUB domain. Interacts with BMPR1A, BMPR1B and BMPR2; the interaction with BMPR1A and BMPR1B is BMP2- and BMP4-dependent. N-glycosylated. Post-translationally, proteolytic cleavage produces a CUB-containing C-terminal fragment that retains the ability to bind to TGFBR2. This reaction is catalyzed in vitro by MMP2 and, to a lesser extent, by MMP9. As to expression, highly expressed in osteoblasts. In normal lung, mainly expressed in bronchial epithelial cells. Tends to be up-regulated in lung cancer cells.

It localises to the secreted. It is found in the cell surface. Functionally, is a positive regulator of the BMP signaling pathway, required for proper chondrogenesis, osteogenesis and skeletal development. It acts as a coreceptor for BMP ligands, particularly BMP2 and BMP4, facilitating their interactions with BMP type I receptors. It is required for ligand-induced recruitment of BMP receptors to lipid rafts. Binds to TGFBR2 and activates TGFB signaling. In lung cancer cells, could serve as an endogenous autocrine and paracrine ligand of TGFBR2, which could regulate TGFBR2 signaling and hence modulate epithelial-mesenchymal transition and cancer progression. In Homo sapiens (Human), this protein is Signal peptide, CUB and EGF-like domain-containing protein 3.